Reading from the N-terminus, the 169-residue chain is ATP synthase subunit b (169 aa).

A helical membrane pass occupies residues 26–46 (FFFVLLIFLIVLGVIAKWVVP).

This sequence belongs to the ATPase B chain family. F-type ATPases have 2 components, F(1) - the catalytic core - and F(0) - the membrane proton channel. F(1) has five subunits: alpha(3), beta(3), gamma(1), delta(1), epsilon(1). F(0) has three main subunits: a(1), b(2) and c(10-14). The alpha and beta chains form an alternating ring which encloses part of the gamma chain. F(1) is attached to F(0) by a central stalk formed by the gamma and epsilon chains, while a peripheral stalk is formed by the delta and b chains.

It is found in the cell membrane. Its function is as follows. F(1)F(0) ATP synthase produces ATP from ADP in the presence of a proton or sodium gradient. F-type ATPases consist of two structural domains, F(1) containing the extramembraneous catalytic core and F(0) containing the membrane proton channel, linked together by a central stalk and a peripheral stalk. During catalysis, ATP synthesis in the catalytic domain of F(1) is coupled via a rotary mechanism of the central stalk subunits to proton translocation. Component of the F(0) channel, it forms part of the peripheral stalk, linking F(1) to F(0). This is ATP synthase subunit b from Mycobacterium sp. (strain JLS).